Reading from the N-terminus, the 317-residue chain is tRNA pseudouridine synthase B (317 aa).

D47 serves as the catalytic Nucleophile.

The protein belongs to the pseudouridine synthase TruB family. Type 1 subfamily.

The enzyme catalyses uridine(55) in tRNA = pseudouridine(55) in tRNA. In terms of biological role, responsible for synthesis of pseudouridine from uracil-55 in the psi GC loop of transfer RNAs. The protein is tRNA pseudouridine synthase B of Vibrio atlanticus (strain LGP32) (Vibrio splendidus (strain Mel32)).